Consider the following 163-residue polypeptide: MSFNFRIGQGYDVHAFGPGEHVMLGGVRVAHSHGVLAHSDGDVVLHALCDAMLGALALGDIGRHFPPSDERWKDADSAQFLQHCDGLLRERGWRVGNADITVICERPKVGPHAVAMRERIAGLLAIELDAVSVKATTSEQLGFTGRGEGIAAQAAVLLGRIAA.

Aspartate 12 and histidine 14 together coordinate a divalent metal cation. 4-CDP-2-C-methyl-D-erythritol 2-phosphate-binding positions include 12–14 (DVH) and 38–39 (HS). A divalent metal cation is bound at residue histidine 46. 4-CDP-2-C-methyl-D-erythritol 2-phosphate contacts are provided by residues 60-62 (DIG), 136-139 (TTSE), phenylalanine 143, and arginine 146.

The protein belongs to the IspF family. In terms of assembly, homotrimer. It depends on a divalent metal cation as a cofactor.

The enzyme catalyses 4-CDP-2-C-methyl-D-erythritol 2-phosphate = 2-C-methyl-D-erythritol 2,4-cyclic diphosphate + CMP. The protein operates within isoprenoid biosynthesis; isopentenyl diphosphate biosynthesis via DXP pathway; isopentenyl diphosphate from 1-deoxy-D-xylulose 5-phosphate: step 4/6. Functionally, involved in the biosynthesis of isopentenyl diphosphate (IPP) and dimethylallyl diphosphate (DMAPP), two major building blocks of isoprenoid compounds. Catalyzes the conversion of 4-diphosphocytidyl-2-C-methyl-D-erythritol 2-phosphate (CDP-ME2P) to 2-C-methyl-D-erythritol 2,4-cyclodiphosphate (ME-CPP) with a corresponding release of cytidine 5-monophosphate (CMP). This chain is 2-C-methyl-D-erythritol 2,4-cyclodiphosphate synthase, found in Xanthomonas oryzae pv. oryzae (strain MAFF 311018).